The following is a 125-amino-acid chain: Unclassified hydrophobin 8 (125 aa).

Residues 1–20 (MMFSKPVVLATTALATFAAA) form the signal peptide. 4 cysteine pairs are disulfide-bonded: C31-C105, C38-C99, C39-C90, and C106-C119.

Belongs to the fungal hydrophobin family. Self-assembles to form functional amyloid fibrils called rodlets. Self-assembly into fibrillar rodlets occurs spontaneously at hydrophobic:hydrophilic interfaces and the rodlets further associate laterally to form amphipathic monolayers.

The protein resides in the secreted. It localises to the cell wall. In terms of biological role, aerial growth, conidiation, and dispersal of filamentous fungi in the environment rely upon a capability of their secreting small amphipathic proteins called hydrophobins (HPBs) with low sequence identity. Class I can self-assemble into an outermost layer of rodlet bundles on aerial cell surfaces, conferring cellular hydrophobicity that supports fungal growth, development and dispersal; whereas Class II form highly ordered films at water-air interfaces through intermolecular interactions but contribute nothing to the rodlet structure. Hydph8 is an unclassified hydrophobin involved in mycelial growth. The chain is Unclassified hydrophobin 8 from Pleurotus ostreatus (strain PC15) (Oyster mushroom).